The following is a 511-amino-acid chain: ATP synthase subunit alpha 2 (511 aa).

Position 173–180 (173–180 (GDRQTGKS)) interacts with ATP.

The protein belongs to the ATPase alpha/beta chains family. In terms of assembly, F-type ATPases have 2 components, CF(1) - the catalytic core - and CF(0) - the membrane proton channel. CF(1) has five subunits: alpha(3), beta(3), gamma(1), delta(1), epsilon(1). CF(0) has three main subunits: a(1), b(2) and c(9-12). The alpha and beta chains form an alternating ring which encloses part of the gamma chain. CF(1) is attached to CF(0) by a central stalk formed by the gamma and epsilon chains, while a peripheral stalk is formed by the delta and b chains.

The protein resides in the cell inner membrane. The enzyme catalyses ATP + H2O + 4 H(+)(in) = ADP + phosphate + 5 H(+)(out). Its function is as follows. Produces ATP from ADP in the presence of a proton gradient across the membrane. The alpha chain is a regulatory subunit. The polypeptide is ATP synthase subunit alpha 2 (Nitrosospira multiformis (strain ATCC 25196 / NCIMB 11849 / C 71)).